Reading from the N-terminus, the 611-residue chain is Broad-specificity linear acyl-CoA dehydrogenase FadE5 (611 aa).

FAD is bound by residues 162–165 (MVLT), Ser-171, and Thr-198. Ser-171 contributes to the a 2,3-saturated acyl-CoA binding site. Residues 224–225 (TK) and Arg-301 each bind a 2,3-saturated acyl-CoA. An FAD-binding site is contributed by Arg-326. Lys-338 is a binding site for a 2,3-saturated acyl-CoA. 420-424 (QTLGG) serves as a coordination point for FAD. Glu-447 serves as a coordination point for a 2,3-saturated acyl-CoA. The active-site Proton acceptor is the Glu-447. FAD is bound at residue Thr-449. Residues Asp-456 and 460 to 461 (RK) contribute to the a 2,3-saturated acyl-CoA site.

It belongs to the acyl-CoA dehydrogenase family. In terms of assembly, homodimer. FAD is required as a cofactor.

It carries out the reaction a long-chain 2,3-saturated fatty acyl-CoA + oxidized [electron-transfer flavoprotein] + H(+) = a long-chain (2E)-enoyl-CoA + reduced [electron-transfer flavoprotein]. The catalysed reaction is a medium-chain 2,3-saturated fatty acyl-CoA + oxidized [electron-transfer flavoprotein] + H(+) = a medium-chain (2E)-enoyl-CoA + reduced [electron-transfer flavoprotein]. The enzyme catalyses a short-chain 2,3-saturated fatty acyl-CoA + oxidized [electron-transfer flavoprotein] + H(+) = a short-chain (2E)-enoyl-CoA + reduced [electron-transfer flavoprotein]. It catalyses the reaction octadecanoyl-CoA + oxidized [electron-transfer flavoprotein] + H(+) = (2E)-octadecenoyl-CoA + reduced [electron-transfer flavoprotein]. It carries out the reaction oxidized [electron-transfer flavoprotein] + hexadecanoyl-CoA + H(+) = (2E)-hexadecenoyl-CoA + reduced [electron-transfer flavoprotein]. The catalysed reaction is dodecanoyl-CoA + oxidized [electron-transfer flavoprotein] + H(+) = (2E)-dodecenoyl-CoA + reduced [electron-transfer flavoprotein]. The enzyme catalyses decanoyl-CoA + oxidized [electron-transfer flavoprotein] + H(+) = (2E)-decenoyl-CoA + reduced [electron-transfer flavoprotein]. It catalyses the reaction hexanoyl-CoA + oxidized [electron-transfer flavoprotein] + H(+) = (2E)-hexenoyl-CoA + reduced [electron-transfer flavoprotein]. It carries out the reaction butanoyl-CoA + oxidized [electron-transfer flavoprotein] + H(+) = (2E)-butenoyl-CoA + reduced [electron-transfer flavoprotein]. It participates in lipid metabolism; fatty acid metabolism. Acyl-CoA dehydrogenase that exhibits broad specificity for linear acyl-CoA substrates, with a preference for long-chain substrates. This is Broad-specificity linear acyl-CoA dehydrogenase FadE5 from Mycobacterium tuberculosis (strain ATCC 25618 / H37Rv).